We begin with the raw amino-acid sequence, 145 residues long: DNA polymerase epsilon subunit 3 (145 aa).

A2 is modified (N-acetylalanine). A Phosphothreonine modification is found at T83. A coiled-coil region spans residues 85–144 (LKEALEAYRREQKGKKEASEQKKKDKDKKDCEEQDKSREEEDEDEERLDEEEQNEEEEVD). Positions 93-123 (RREQKGKKEASEQKKKDKDKKDCEEQDKSRE) are enriched in basic and acidic residues. A disordered region spans residues 93–145 (RREQKGKKEASEQKKKDKDKKDCEEQDKSREEEDEDEERLDEEEQNEEEEVDN). The residue at position 121 (S121) is a Phosphoserine. Acidic residues predominate over residues 124-145 (EEDEDEERLDEEEQNEEEEVDN).

Component of the DNA polymerase epsilon complex consisting of four subunits: the catalytic subunit POLE and the accessory subunits POLE2, POLE3 and POLE4. Interaction with POLE4 is a prerequisite for further binding with POLE and POLE2. Heterodimer with CHRAC1; binds to DNA. Component of the CHRAC ISWI chromatin remodeling complex at least composed of SMARCA5/SNF2H, BAZ1A/ACF1, CHRAC1 and POLE3; the complex preferentially binds DNA through the CHRAC1-POLE3 heterodimer and possesses ATP-dependent nucleosome-remodeling activity. Within the complex, the heterodimer with CHRAC1 interacts with SMARCA5/SNF2H; the interaction is direct and enhances nucleosome sliding activity by the SMARCA5/SNF2H and BAZ1A/ACF1 interaction. Within the complex, the heterodimer with CHRAC1 interacts with BAZ1A/ACF1; the interactions are direct.

The protein resides in the nucleus. Accessory component of the DNA polymerase epsilon complex. Participates in DNA repair and in chromosomal DNA replication. Forms a complex with CHRAC1 and binds naked DNA, which is then incorporated into chromatin, aided by the nucleosome-remodeling activity of ISWI/SNF2H and ACF1. Does not enhance nucleosome sliding activity of the ACF-5 ISWI chromatin remodeling complex. The polypeptide is DNA polymerase epsilon subunit 3 (Pole3) (Rattus norvegicus (Rat)).